Here is a 189-residue protein sequence, read N- to C-terminus: Crossover junction endodeoxyribonuclease RuvC (189 aa).

Active-site residues include Asp11, Glu71, and Asp143. 3 residues coordinate Mg(2+): Asp11, Glu71, and Asp143.

The protein belongs to the RuvC family. In terms of assembly, homodimer which binds Holliday junction (HJ) DNA. The HJ becomes 2-fold symmetrical on binding to RuvC with unstacked arms; it has a different conformation from HJ DNA in complex with RuvA. In the full resolvosome a probable DNA-RuvA(4)-RuvB(12)-RuvC(2) complex forms which resolves the HJ. The cofactor is Mg(2+).

It is found in the cytoplasm. The enzyme catalyses Endonucleolytic cleavage at a junction such as a reciprocal single-stranded crossover between two homologous DNA duplexes (Holliday junction).. The RuvA-RuvB-RuvC complex processes Holliday junction (HJ) DNA during genetic recombination and DNA repair. Endonuclease that resolves HJ intermediates. Cleaves cruciform DNA by making single-stranded nicks across the HJ at symmetrical positions within the homologous arms, yielding a 5'-phosphate and a 3'-hydroxyl group; requires a central core of homology in the junction. The consensus cleavage sequence is 5'-(A/T)TT(C/G)-3'. Cleavage occurs on the 3'-side of the TT dinucleotide at the point of strand exchange. HJ branch migration catalyzed by RuvA-RuvB allows RuvC to scan DNA until it finds its consensus sequence, where it cleaves and resolves the cruciform DNA. This chain is Crossover junction endodeoxyribonuclease RuvC, found in Methylorubrum extorquens (strain CM4 / NCIMB 13688) (Methylobacterium extorquens).